The sequence spans 130 residues: Large ribosomal subunit protein bL19 (130 aa).

This sequence belongs to the bacterial ribosomal protein bL19 family.

Functionally, this protein is located at the 30S-50S ribosomal subunit interface and may play a role in the structure and function of the aminoacyl-tRNA binding site. This Methylorubrum populi (strain ATCC BAA-705 / NCIMB 13946 / BJ001) (Methylobacterium populi) protein is Large ribosomal subunit protein bL19.